Consider the following 311-residue polypeptide: Methionyl-tRNA formyltransferase (311 aa).

Residue 110 to 113 (SLLP) participates in (6S)-5,6,7,8-tetrahydrofolate binding.

This sequence belongs to the Fmt family.

The enzyme catalyses L-methionyl-tRNA(fMet) + (6R)-10-formyltetrahydrofolate = N-formyl-L-methionyl-tRNA(fMet) + (6S)-5,6,7,8-tetrahydrofolate + H(+). Functionally, attaches a formyl group to the free amino group of methionyl-tRNA(fMet). The formyl group appears to play a dual role in the initiator identity of N-formylmethionyl-tRNA by promoting its recognition by IF2 and preventing the misappropriation of this tRNA by the elongation apparatus. This Streptococcus pyogenes serotype M18 (strain MGAS8232) protein is Methionyl-tRNA formyltransferase.